Consider the following 216-residue polypeptide: Glycerol-3-phosphate acyltransferase 3 (216 aa).

The next 5 membrane-spanning stretches (helical) occupy residues 6-26 (LLLVVIVSYLLGSIPFGYLVS), 58-78 (LVAALDVVKGVSAVAFAGLVI), 92-112 (ILFAQVLAGLAAVAGHIWPVF), 125-145 (FGGMIALCPVAAIFGGEVLII), and 158-178 (ITGVVGAYALLIPLTFISGFP).

This sequence belongs to the PlsY family. Probably interacts with PlsX.

Its subcellular location is the cell membrane. It catalyses the reaction an acyl phosphate + sn-glycerol 3-phosphate = a 1-acyl-sn-glycero-3-phosphate + phosphate. The protein operates within lipid metabolism; phospholipid metabolism. Functionally, catalyzes the transfer of an acyl group from acyl-phosphate (acyl-PO(4)) to glycerol-3-phosphate (G3P) to form lysophosphatidic acid (LPA). This enzyme utilizes acyl-phosphate as fatty acyl donor, but not acyl-CoA or acyl-ACP. The chain is Glycerol-3-phosphate acyltransferase 3 from Dehalococcoides mccartyi (strain ATCC BAA-2266 / KCTC 15142 / 195) (Dehalococcoides ethenogenes (strain 195)).